Here is a 472-residue protein sequence, read N- to C-terminus: Protein PIN-LIKES 1 (472 aa).

Over 1–93 the chain is Lumenal; sequence MSLTQSAKLH…FYSMRMRLLD (93 aa). A helical membrane pass occupies residues 94–114; it reads LFITSSIPVAKILLITGIGFY. Residues 115-133 are Cytoplasmic-facing; sequence LALDQVNILNHDARKQLNN. A helical membrane pass occupies residues 134 to 154; it reads IVFYVFSPSLVASSLSETITY. Over 155–161 the chain is Lumenal; the sequence is ESMVKMW. The chain crosses the membrane as a helical span at residues 162–182; that stretch reads FMPLNVLLTFIIGSFLGWIVI. Over 183 to 193 the chain is Cytoplasmic; the sequence is KITKPPSHLRG. Residues 194-214 traverse the membrane as a helical segment; that stretch reads IIVGCCAAGNLGNMPLIIIPA. At 215 to 231 the chain is on the lumenal side; sequence ICNEKGSPFGDPESCEK. A helical transmembrane segment spans residues 232-252; sequence FGLGYIALSMAIGAIYIWTYV. The Cytoplasmic portion of the chain corresponds to 253 to 309; that stretch reads YNLMRMLANPAGETAINSTSSTMPLISPKVEVAEQVGTWGKVKQRVCSVAEKINLRT. The chain crosses the membrane as a helical span at residues 310–330; it reads IFAPSTIAALIALAVGLNPLL. Topologically, residues 331 to 347 are lumenal; it reads RKLLVGNTAPLRVIEDS. The helical transmembrane segment at 348–368 threads the bilayer; that stretch reads VSLLGDGAIPVLTLIVGGNLL. The Cytoplasmic portion of the chain corresponds to 369-379; sequence NGLRGSGINKS. The chain crosses the membrane as a helical span at residues 380–400; the sequence is VIMGVVVVRYLLLPILGVFIV. The Lumenal segment spans residues 401 to 413; that stretch reads RGAHYLGLVTSEP. A helical transmembrane segment spans residues 414–434; it reads LYQFVLLLQYVVPPAMNLGTI. The Cytoplasmic portion of the chain corresponds to 435 to 446; sequence TQLFGSGESECS. A helical membrane pass occupies residues 447-467; that stretch reads VILFWSYALASVSLTVWPTFF. At 468-472 the chain is on the lumenal side; it reads MWLVA.

This sequence belongs to the auxin efflux carrier (TC 2.A.69.2) family. In terms of tissue distribution, expressed in flowers.

The protein resides in the endoplasmic reticulum membrane. Its function is as follows. Involved in cellular auxin homeostasis by regulating auxin metabolism. Regulates intracellular auxin accumulation at the endoplasmic reticulum and thus auxin availability for nuclear auxin signaling. The chain is Protein PIN-LIKES 1 from Arabidopsis thaliana (Mouse-ear cress).